Consider the following 465-residue polypeptide: GTPase Der (465 aa).

2 EngA-type G domains span residues 3-167 (PLVA…PEEG) and 179-352 (IRIA…ESAN). Residues 9–16 (GRPNVGKS), 57–61 (DTGGI), 119–122 (NKID), 185–192 (GRPNVGKS), 232–236 (DTAGL), and 297–300 (NKWD) each bind GTP. The region spanning 353–437 (KTFTTSEVNK…PVSFIFREGT (85 aa)) is the KH-like domain.

This sequence belongs to the TRAFAC class TrmE-Era-EngA-EngB-Septin-like GTPase superfamily. EngA (Der) GTPase family. As to quaternary structure, associates with the 50S ribosomal subunit.

GTPase that plays an essential role in the late steps of ribosome biogenesis. The chain is GTPase Der from Stenotrophomonas maltophilia (strain R551-3).